Here is a 552-residue protein sequence, read N- to C-terminus: Rqc2 homolog RqcH (552 aa).

2 coiled-coil regions span residues 271 to 317 (RDRV…QKGE) and 357 to 398 (NAQR…MLGQ).

It belongs to the NEMF family. As to quaternary structure, associates with stalled 50S ribosomal subunits, binds to RqcH. Recombinant protein interacts with the N-terminal 30 kDa of human fibronectin (FN1).

Key component of the ribosome quality control system (RQC), a ribosome-associated complex that mediates the extraction of incompletely synthesized nascent chains from stalled ribosomes and their subsequent degradation. RqcH recruits Ala-charged tRNA, and with RqcP directs the elongation of stalled nascent chains on 50S ribosomal subunits, leading to non-templated C-terminal alanine extensions (Ala tail). The Ala tail promotes nascent chain degradation. May add between 1 and at least 8 Ala residues. Binds to stalled 50S ribosomal subunits. The protein is Rqc2 homolog RqcH of Streptococcus suis (strain 05ZYH33).